The chain runs to 138 residues: ATP synthase epsilon chain (138 aa).

Belongs to the ATPase epsilon chain family. In terms of assembly, F-type ATPases have 2 components, CF(1) - the catalytic core - and CF(0) - the membrane proton channel. CF(1) has five subunits: alpha(3), beta(3), gamma(1), delta(1), epsilon(1). CF(0) has three main subunits: a, b and c.

The protein resides in the cell inner membrane. Produces ATP from ADP in the presence of a proton gradient across the membrane. The polypeptide is ATP synthase epsilon chain (Trichlorobacter lovleyi (strain ATCC BAA-1151 / DSM 17278 / SZ) (Geobacter lovleyi)).